Consider the following 368-residue polypeptide: MLIIKESDVKKLISLKEVIDINEQVFIKESKEEVVCPERIILPVEKTQPQQDSNEPINKKQLVGNLYFKPSLVVDESVGIKIVGTFANNANKGLPTVPATIILNDIETGLANAVIGATYITGARTAAGSAISVKYLATESPETIFVFGSSLQAQLHIEMILLLKPTIKKVYISSRSKENVDKLIIQLKNENNYNNDAVEFNYCAATGAGDDKDIINRYLLEADIIVTATSSNEPLFNGHEVLSEKQRDFKKKPLLICAVGSSRPTNRELDSFTISNSNLIVDDVNSCMVSGELFIPINKENIITKSHILGKLSDVVSGKYKQQTTTTTSKSITVYKSSGTAIQDVATANYIYKKALQNNIGYNININD.

Belongs to the ornithine cyclodeaminase/mu-crystallin family.

This is an uncharacterized protein from Dictyostelium discoideum (Social amoeba).